We begin with the raw amino-acid sequence, 466 residues long: Probable periplasmic serine protease do/HhoA-like (466 aa).

The first 29 residues, 1–29 (MKKTRFVLNSIALGLSVLSTSFVAHVAQA), serve as a signal peptide directing secretion. Active-site charge relay system residues include His120, Asp150, and Ser226. PDZ domains are found at residues 270 to 361 (ILEF…LRDG) and 367 to 458 (KMKL…LRGD).

It belongs to the peptidase S1C family.

It localises to the periplasm. This is Probable periplasmic serine protease do/HhoA-like from Haemophilus influenzae (strain ATCC 51907 / DSM 11121 / KW20 / Rd).